A 426-amino-acid chain; its full sequence is G2/mitotic-specific cyclin-A (426 aa).

Residues 1–11 show a composition bias toward polar residues; the sequence is MSMVHGSSFQI. Residues 1–22 form a disordered region; it reads MSMVHGSSFQIAQDGENENQGV.

The protein belongs to the cyclin family. Cyclin AB subfamily.

In terms of biological role, essential for the control of the cell cycle at the G2/M (mitosis) transition. Interacts with the CDC2 and CDK2 protein kinases to form MPF. G2/M cyclins accumulate steadily during G2 and are abruptly destroyed at mitosis. The sequence is that of G2/mitotic-specific cyclin-A from Patella vulgata (Common limpet).